The following is a 180-amino-acid chain: Iron sulfur cluster assembly protein 1, mitochondrial (180 aa).

The protein belongs to the NifU family. In terms of assembly, component of the core Fe-S cluster (ISC) assembly machinery. It depends on [2Fe-2S] cluster as a cofactor.

The protein resides in the mitochondrion matrix. It functions in the pathway cofactor biosynthesis; iron-sulfur cluster biosynthesis. Scaffold protein for the de novo synthesis of iron-sulfur (Fe-S) clusters within mitochondria, which is required for maturation of both mitochondrial and cytoplasmic [2Fe-2S] and [4Fe-4S] proteins. First, a [2Fe-2S] cluster is transiently assembled on the scaffold protein ISU1. In a second step, the cluster is released from ISU1, transferred to a glutaredoxin, followed by the formation of mitochondrial [2Fe-2S] proteins, the synthesis of [4Fe-4S] clusters and their target-specific insertion into the recipient apoproteins. Cluster assembly on ISU1 depends on the function of the cysteine desulfurase complex NFS1-ISD11, which serves as the sulfur donor for cluster synthesis, the iron-binding protein frataxin as the putative iron donor, and the electron transfer chain comprised of ferredoxin reductase and ferredoxin, which receive their electrons from NADH. This is Iron sulfur cluster assembly protein 1, mitochondrial (ISU1) from Kluyveromyces lactis (strain ATCC 8585 / CBS 2359 / DSM 70799 / NBRC 1267 / NRRL Y-1140 / WM37) (Yeast).